A 436-amino-acid polypeptide reads, in one-letter code: Histidinol dehydrogenase (436 aa).

Substrate-binding residues include S242, Q264, and H267. Residues Q264 and H267 each coordinate Zn(2+). Active-site proton acceptor residues include E332 and H333. Residues H333, D366, E420, and H425 each coordinate substrate. Residue D366 coordinates Zn(2+). H425 contacts Zn(2+).

It belongs to the histidinol dehydrogenase family. Requires Zn(2+) as cofactor.

It carries out the reaction L-histidinol + 2 NAD(+) + H2O = L-histidine + 2 NADH + 3 H(+). Its pathway is amino-acid biosynthesis; L-histidine biosynthesis; L-histidine from 5-phospho-alpha-D-ribose 1-diphosphate: step 9/9. Functionally, catalyzes the sequential NAD-dependent oxidations of L-histidinol to L-histidinaldehyde and then to L-histidine. In Nitratidesulfovibrio vulgaris (strain ATCC 29579 / DSM 644 / CCUG 34227 / NCIMB 8303 / VKM B-1760 / Hildenborough) (Desulfovibrio vulgaris), this protein is Histidinol dehydrogenase.